We begin with the raw amino-acid sequence, 178 residues long: Interleukin-10 (178 aa).

An N-terminal signal peptide occupies residues 1 to 18 (MHSSALLCCLVFLAGVAA). Intrachain disulfides connect Cys-30/Cys-126 and Cys-80/Cys-132. N-linked (GlcNAc...) asparagine glycosylation occurs at Asn-134.

This sequence belongs to the IL-10 family. In terms of assembly, homodimer. Interacts with IL10RA and IL10RB.

It localises to the secreted. Functionally, major immune regulatory cytokine that acts on many cells of the immune system where it has profound anti-inflammatory functions, limiting excessive tissue disruption caused by inflammation. Mechanistically, IL10 binds to its heterotetrameric receptor comprising IL10RA and IL10RB leading to JAK1 and STAT2-mediated phosphorylation of STAT3. In turn, STAT3 translocates to the nucleus where it drives expression of anti-inflammatory mediators. Targets antigen-presenting cells (APCs) such as macrophages and monocytes and inhibits their release of pro-inflammatory cytokines including granulocyte-macrophage colony-stimulating factor /GM-CSF, granulocyte colony-stimulating factor/G-CSF, IL-1 alpha, IL-1 beta, IL-6, IL-8 and TNF-alpha. Also interferes with antigen presentation by reducing the expression of MHC-class II and co-stimulatory molecules, thereby inhibiting their ability to induce T cell activation. In addition, controls the inflammatory response of macrophages by reprogramming essential metabolic pathways including mTOR signaling. The polypeptide is Interleukin-10 (IL10) (Bos taurus (Bovine)).